The chain runs to 152 residues: Protein FERTILITY RESTORER RF2, mitochondrial (152 aa).

The transit peptide at 1–52 (MSTLVTCSLPGAVTTHASTRRFGGSQFQTSQASCISFKREVSAKAVLRSVRC) directs the protein to the mitochondrion. Positions 52–69 (CNATQTQSAQRKSSTATV) are enriched in polar residues. Positions 52–99 (CNATQTQSAQRKSSTATVKRSDPKGKIQGPKLDDGSGGFPPFRFGKGG) are disordered.

It is found in the mitochondrion. Restores fertility in rice varieties with LD-type cytoplasmic male sterility (CMS). CMS is caused by genetic incompatibility between nuclei and mitochondria within male reproductive organs. Corresponds to the functional allele of RF2, which is dependent of the presence of Ile-78 in the japonica cultivars Fukuyama and Owarihatamochi (AC F1SZ42), and indica cultivar Kasalath (AC F1SZ41). Non-functional RF2 alleles are found in japonica cultivars Taichung 65 and Nipponbare (AC F1SZ44), where Ile-78 is replaced by Thr-78. In Oryza sativa subsp. japonica (Rice), this protein is Protein FERTILITY RESTORER RF2, mitochondrial.